The chain runs to 179 residues: Peptidyl-tRNA hydrolase 2, mitochondrial (179 aa).

Residues 10-32 form a helical membrane-spanning segment; that stretch reads YLTNPGALSLAAGVACGVCLGWG. Residues lysine 76, lysine 81, lysine 95, lysine 106, lysine 115, lysine 171, and lysine 177 each participate in a glycyl lysine isopeptide (Lys-Gly) (interchain with G-Cter in ubiquitin) cross-link.

Belongs to the PTH2 family. Monomer. In terms of processing, ubiquitinated by PRKN during mitophagy, leading to its degradation and enhancement of mitophagy. Deubiquitinated by USP30.

It is found in the mitochondrion outer membrane. It carries out the reaction an N-acyl-L-alpha-aminoacyl-tRNA + H2O = an N-acyl-L-amino acid + a tRNA + H(+). Functionally, peptidyl-tRNA hydrolase which releases tRNAs from the ribosome during protein synthesis. Promotes caspase-independent apoptosis by regulating the function of two transcriptional regulators, AES and TLE1. The chain is Peptidyl-tRNA hydrolase 2, mitochondrial (PTRH2) from Bos taurus (Bovine).